Here is a 247-residue protein sequence, read N- to C-terminus: OCIA domain-containing protein 1 (247 aa).

Residues 1–112 (MNGRADFREP…KKLENSPLGE (112 aa)) enclose the OCIA domain. A phosphoserine mark is found at serine 108 and serine 116. The tract at residues 116–247 (SGELRRSLPP…VNKYGDTWDE (132 aa)) is disordered. Composition is skewed to polar residues over residues 136–146 (SNVSGQSSFGT) and 168–177 (ASMNESTPTG). 2 stretches are compositionally biased toward basic and acidic residues: residues 192–210 (DSPK…KNRE) and 218–240 (HKTD…KVNK). Phosphoserine is present on residues serine 193 and serine 198.

Belongs to the OCIAD1 family. As to quaternary structure, interacts with OCIAD2. Interacts with STAT3.

The protein localises to the endosome. Maintains stem cell potency. Increases STAT3 phosphorylation and controls ERK phosphorylation. May act as a scaffold, increasing STAT3 recruitment onto endosomes. The sequence is that of OCIA domain-containing protein 1 from Rattus norvegicus (Rat).